We begin with the raw amino-acid sequence, 325 residues long: Post-GPI attachment to proteins factor 2-like (325 aa).

Helical transmembrane passes span 80–100 (VVTALLPLVTLFTCFVTAYVF), 130–150 (YFWRFSIALHIGPRIPIAFVY), 171–191 (LLITLILVLNCIEIASLGGVT), 205–225 (IFITFMVCSLCYMLATIKLNG), 243–263 (WKKILFAVSILSTVGLLVFFA), and 276–296 (WFAFFEYLIAIANMLFHFTII).

It belongs to the PGAP2 family.

It localises to the membrane. This is Post-GPI attachment to proteins factor 2-like from Drosophila melanogaster (Fruit fly).